Consider the following 97-residue polypeptide: MALSLEEVRRIAQLARLRLSEEEERTFAGQLSAILDHVRQLEELDVTAVEPMTHALAAGELPALREDAVRASLAPEEATAAAPAREGTAFKVPRIIE.

This sequence belongs to the GatC family. In terms of assembly, heterotrimer of A, B and C subunits.

It carries out the reaction L-glutamyl-tRNA(Gln) + L-glutamine + ATP + H2O = L-glutaminyl-tRNA(Gln) + L-glutamate + ADP + phosphate + H(+). It catalyses the reaction L-aspartyl-tRNA(Asn) + L-glutamine + ATP + H2O = L-asparaginyl-tRNA(Asn) + L-glutamate + ADP + phosphate + 2 H(+). Allows the formation of correctly charged Asn-tRNA(Asn) or Gln-tRNA(Gln) through the transamidation of misacylated Asp-tRNA(Asn) or Glu-tRNA(Gln) in organisms which lack either or both of asparaginyl-tRNA or glutaminyl-tRNA synthetases. The reaction takes place in the presence of glutamine and ATP through an activated phospho-Asp-tRNA(Asn) or phospho-Glu-tRNA(Gln). This chain is Aspartyl/glutamyl-tRNA(Asn/Gln) amidotransferase subunit C, found in Anaeromyxobacter dehalogenans (strain 2CP-C).